We begin with the raw amino-acid sequence, 213 residues long: Lactobacillus shifted protein (213 aa).

Positions 28–38 are enriched in polar residues; that stretch reads PRFTENAMQPN. 2 disordered regions span residues 28–56 and 182–213; these read PRFT…DATP and PTSS…YEQR.

The chain is Lactobacillus shifted protein (lbsA) from Emericella nidulans (strain FGSC A4 / ATCC 38163 / CBS 112.46 / NRRL 194 / M139) (Aspergillus nidulans).